The chain runs to 833 residues: Transmembrane protease serine 7 (833 aa).

Over 1–62 (MDKEKSDPSC…RAPFWNVQNK (62 aa)) the chain is Cytoplasmic. Residues 30–49 (KLPGRRLPRKPIGKARPRKQ) form a disordered region. Over residues 32–49 (PGRRLPRKPIGKARPRKQ) the composition is skewed to basic residues. Residues 63–83 (IILFTVFLFILAVTAWTLLWL) traverse the membrane as a helical; Signal-anchor for type II membrane protein segment. Residues 84–829 (YISKTDSKDA…NFVPWIHKYV (746 aa)) lie on the Extracellular side of the membrane. One can recognise an SEA domain in the interval 92 to 220 (DAFYFVGMFR…DSVVLNAGLR (129 aa)). Asparagine 196 carries N-linked (GlcNAc...) asparagine glycosylation. Disulfide bonds link cysteine 233–cysteine 259, cysteine 285–cysteine 312, and cysteine 355–cysteine 386. CUB domains follow at residues 233–350 (CSQY…FEVI) and 355–471 (CENT…YNIS). Asparagine 405 and asparagine 469 each carry an N-linked (GlcNAc...) asparagine glycan. LDL-receptor class A domains follow at residues 473–509 (PCPAGSFRCSSGLCVPQAQRCDGVNDCFDESDELFCV) and 548–585 (PCTNRTFKCGNDICFRKQNAQCDGIVDCPDRSDEEGCG). Intrachain disulfides connect cysteine 474-cysteine 486, cysteine 481-cysteine 499, cysteine 493-cysteine 508, cysteine 549-cysteine 561, cysteine 556-cysteine 575, cysteine 569-cysteine 584, and cysteine 621-cysteine 637. The region spanning 596-830 (VVGGSDSQEG…FVPWIHKYVP (235 aa)) is the Peptidase S1 domain. Residues histidine 636 and aspartate 684 each act as charge relay system in the active site. 3 disulfide bridges follow: cysteine 720–cysteine 786, cysteine 752–cysteine 765, and cysteine 776–cysteine 806. Serine 780 serves as the catalytic Charge relay system.

This sequence belongs to the peptidase S1 family. Forms a heterodimer with SERPINA5. Post-translationally, N-glycosylated.

The protein resides in the cell membrane. In terms of biological role, serine protease which preferentially hydrolyzes peptides with Arg at the P1 position. In Rattus norvegicus (Rat), this protein is Transmembrane protease serine 7.